Reading from the N-terminus, the 371-residue chain is GDSL esterase/lipase At3g27950 (371 aa).

Positions 1–23 (MAISKITLAIIVLLLGFTEKLSA) are cleaved as a signal peptide. Ser39 acts as the Nucleophile in catalysis. Asn82, Asn143, Asn178, Asn194, and Asn315 each carry an N-linked (GlcNAc...) asparagine glycan. Residues Asp334 and His337 contribute to the active site.

It belongs to the 'GDSL' lipolytic enzyme family.

The protein localises to the secreted. The sequence is that of GDSL esterase/lipase At3g27950 from Arabidopsis thaliana (Mouse-ear cress).